Here is a 155-residue protein sequence, read N- to C-terminus: Protein Smg homolog (155 aa).

The protein belongs to the Smg family.

This chain is Protein Smg homolog, found in Azoarcus sp. (strain BH72).